Consider the following 893-residue polypeptide: Alanine--tRNA ligase (893 aa).

Residues His-573, His-577, Cys-676, and His-680 each coordinate Zn(2+). The tract at residues 853–872 (LGGGGGGKDDLAQGGGQDPS) is disordered.

This sequence belongs to the class-II aminoacyl-tRNA synthetase family. The cofactor is Zn(2+).

Its subcellular location is the cytoplasm. The enzyme catalyses tRNA(Ala) + L-alanine + ATP = L-alanyl-tRNA(Ala) + AMP + diphosphate. In terms of biological role, catalyzes the attachment of alanine to tRNA(Ala) in a two-step reaction: alanine is first activated by ATP to form Ala-AMP and then transferred to the acceptor end of tRNA(Ala). Also edits incorrectly charged Ser-tRNA(Ala) and Gly-tRNA(Ala) via its editing domain. The sequence is that of Alanine--tRNA ligase from Kineococcus radiotolerans (strain ATCC BAA-149 / DSM 14245 / SRS30216).